The primary structure comprises 410 residues: 2-oxoglutarate-dependent dioxygenase AOP3 (410 aa).

The Fe2OG dioxygenase domain occupies 258 to 355 (GNASVGAKEA…RYAAALFSNP (98 aa)). Fe cation-binding residues include H278, D280, and H335. R346 serves as a coordination point for 2-oxoglutarate.

The protein belongs to the iron/ascorbate-dependent oxidoreductase family. Fe(2+) is required as a cofactor.

2-oxoglutarate-dependent dioxygenase involved in glucosinolates biosynthesis. Catalyzes the conversion of methylsulfinylalkyl glucosinolates to hydroxyalkyl glucosinolates. The chain is 2-oxoglutarate-dependent dioxygenase AOP3 (AOP3) from Arabidopsis thaliana (Mouse-ear cress).